Here is a 431-residue protein sequence, read N- to C-terminus: Serine--tRNA ligase (431 aa).

238–240 is a binding site for L-serine; that stretch reads TAE. Residue 269–271 coordinates ATP; that stretch reads RSE. Glu-292 serves as a coordination point for L-serine. 356–359 serves as a coordination point for ATP; the sequence is EISS. Ser-392 contributes to the L-serine binding site.

It belongs to the class-II aminoacyl-tRNA synthetase family. Type-1 seryl-tRNA synthetase subfamily. As to quaternary structure, homodimer. The tRNA molecule binds across the dimer.

Its subcellular location is the cytoplasm. The enzyme catalyses tRNA(Ser) + L-serine + ATP = L-seryl-tRNA(Ser) + AMP + diphosphate + H(+). The catalysed reaction is tRNA(Sec) + L-serine + ATP = L-seryl-tRNA(Sec) + AMP + diphosphate + H(+). Its pathway is aminoacyl-tRNA biosynthesis; selenocysteinyl-tRNA(Sec) biosynthesis; L-seryl-tRNA(Sec) from L-serine and tRNA(Sec): step 1/1. In terms of biological role, catalyzes the attachment of serine to tRNA(Ser). Is also able to aminoacylate tRNA(Sec) with serine, to form the misacylated tRNA L-seryl-tRNA(Sec), which will be further converted into selenocysteinyl-tRNA(Sec). The chain is Serine--tRNA ligase from Pectobacterium carotovorum subsp. carotovorum (strain PC1).